The sequence spans 318 residues: Acetyl-coenzyme A carboxylase carboxyl transferase subunit alpha (318 aa).

One can recognise a CoA carboxyltransferase C-terminal domain in the interval 38-292 (KLEKRLAKLE…NKTITKSLHA (255 aa)).

The protein belongs to the AccA family. Acetyl-CoA carboxylase is a heterohexamer composed of biotin carboxyl carrier protein (AccB), biotin carboxylase (AccC) and two subunits each of ACCase subunit alpha (AccA) and ACCase subunit beta (AccD).

The protein resides in the cytoplasm. It carries out the reaction N(6)-carboxybiotinyl-L-lysyl-[protein] + acetyl-CoA = N(6)-biotinyl-L-lysyl-[protein] + malonyl-CoA. Its pathway is lipid metabolism; malonyl-CoA biosynthesis; malonyl-CoA from acetyl-CoA: step 1/1. Functionally, component of the acetyl coenzyme A carboxylase (ACC) complex. First, biotin carboxylase catalyzes the carboxylation of biotin on its carrier protein (BCCP) and then the CO(2) group is transferred by the carboxyltransferase to acetyl-CoA to form malonyl-CoA. The protein is Acetyl-coenzyme A carboxylase carboxyl transferase subunit alpha of Listeria monocytogenes serotype 4b (strain CLIP80459).